The chain runs to 465 residues: Ribulose bisphosphate carboxylase large chain (465 aa).

An N6,N6,N6-trimethyllysine modification is found at Lys-4. The substrate site is built by Asn-113 and Thr-163. Lys-165 functions as the Proton acceptor in the catalytic mechanism. Lys-167 contributes to the substrate binding site. Mg(2+)-binding residues include Lys-191, Asp-193, and Glu-194. At Lys-191 the chain carries N6-carboxylysine. His-284 serves as the catalytic Proton acceptor. 3 residues coordinate substrate: Arg-285, His-317, and Ser-369.

The protein belongs to the RuBisCO large chain family. Type I subfamily. Heterohexadecamer of 8 large chains and 8 small chains; disulfide-linked. The disulfide link is formed within the large subunit homodimers. The cofactor is Mg(2+). The disulfide bond which can form in the large chain dimeric partners within the hexadecamer appears to be associated with oxidative stress and protein turnover.

The protein resides in the plastid. It is found in the chloroplast. It catalyses the reaction 2 (2R)-3-phosphoglycerate + 2 H(+) = D-ribulose 1,5-bisphosphate + CO2 + H2O. The enzyme catalyses D-ribulose 1,5-bisphosphate + O2 = 2-phosphoglycolate + (2R)-3-phosphoglycerate + 2 H(+). Functionally, ruBisCO catalyzes two reactions: the carboxylation of D-ribulose 1,5-bisphosphate, the primary event in carbon dioxide fixation, as well as the oxidative fragmentation of the pentose substrate in the photorespiration process. Both reactions occur simultaneously and in competition at the same active site. This Dillenia indica (Elephant apple) protein is Ribulose bisphosphate carboxylase large chain.